Consider the following 100-residue polypeptide: Small ribosomal subunit protein uS14 (100 aa).

It belongs to the universal ribosomal protein uS14 family. As to quaternary structure, part of the 30S ribosomal subunit. Contacts proteins S3 and S10.

Its function is as follows. Binds 16S rRNA, required for the assembly of 30S particles and may also be responsible for determining the conformation of the 16S rRNA at the A site. The sequence is that of Small ribosomal subunit protein uS14 from Synechococcus sp. (strain CC9902).